The following is a 276-amino-acid chain: uncharacterized protein (276 aa).

An N-terminal signal peptide occupies residues 1 to 16 (MELGLILMFASAFVSA). Asparagine 265 carries N-linked (GlcNAc...) asparagine glycosylation.

This is an uncharacterized protein from Encephalitozoon cuniculi (strain GB-M1) (Microsporidian parasite).